The following is a 407-amino-acid chain: Phosphopentomutase (407 aa).

Residues Asp10, Asp306, His311, Asp347, His348, and His359 each contribute to the Mn(2+) site.

Belongs to the phosphopentomutase family. Mn(2+) is required as a cofactor.

The protein localises to the cytoplasm. It catalyses the reaction 2-deoxy-alpha-D-ribose 1-phosphate = 2-deoxy-D-ribose 5-phosphate. The catalysed reaction is alpha-D-ribose 1-phosphate = D-ribose 5-phosphate. It participates in carbohydrate degradation; 2-deoxy-D-ribose 1-phosphate degradation; D-glyceraldehyde 3-phosphate and acetaldehyde from 2-deoxy-alpha-D-ribose 1-phosphate: step 1/2. Isomerase that catalyzes the conversion of deoxy-ribose 1-phosphate (dRib-1-P) and ribose 1-phosphate (Rib-1-P) to deoxy-ribose 5-phosphate (dRib-5-P) and ribose 5-phosphate (Rib-5-P), respectively. In Cronobacter sakazakii (strain ATCC BAA-894) (Enterobacter sakazakii), this protein is Phosphopentomutase.